Here is a 660-residue protein sequence, read N- to C-terminus: Cullin-associated NEDD8-dissociated protein 1 homolog (660 aa).

Lysine 16 participates in a covalent cross-link: Glycyl lysine isopeptide (Lys-Gly) (interchain with G-Cter in NEDD8). Residues 339 to 364 (TQNENDHGSDNLIDSDDGFGSDNDPE) form a disordered region. Acidic residues predominate over residues 351–363 (IDSDDGFGSDNDP).

In terms of assembly, interacts with unneddylated cullin CDC53. In terms of processing, neddylated at Lys-16.

In terms of biological role, assembly factor of SCF (SKP1-CUL1-F-box protein) E3 ubiquitin ligase complexes that promotes the exchange of the substrate-recognition F-box subunit in SCF complexes, thereby playing a key role in the cellular repertoire of SCF complexes. Acts as a F-box protein exchange factor. Involved in the aging process. Longevity-assurance protein. This is Cullin-associated NEDD8-dissociated protein 1 homolog (LAG2) from Saccharomyces cerevisiae (strain ATCC 204508 / S288c) (Baker's yeast).